The chain runs to 205 residues: N-(5'-phosphoribosyl)anthranilate isomerase (205 aa).

The protein belongs to the TrpF family.

The catalysed reaction is N-(5-phospho-beta-D-ribosyl)anthranilate = 1-(2-carboxyphenylamino)-1-deoxy-D-ribulose 5-phosphate. It participates in amino-acid biosynthesis; L-tryptophan biosynthesis; L-tryptophan from chorismate: step 3/5. The protein is N-(5'-phosphoribosyl)anthranilate isomerase of Trichlorobacter lovleyi (strain ATCC BAA-1151 / DSM 17278 / SZ) (Geobacter lovleyi).